A 257-amino-acid chain; its full sequence is Hydroxyacylglutathione hydrolase (257 aa).

Zn(2+)-binding residues include His53, His55, Asp57, His58, His109, Asp126, and His164.

The protein belongs to the metallo-beta-lactamase superfamily. Glyoxalase II family. As to quaternary structure, monomer. The cofactor is Zn(2+).

It catalyses the reaction an S-(2-hydroxyacyl)glutathione + H2O = a 2-hydroxy carboxylate + glutathione + H(+). The protein operates within secondary metabolite metabolism; methylglyoxal degradation; (R)-lactate from methylglyoxal: step 2/2. In terms of biological role, thiolesterase that catalyzes the hydrolysis of S-D-lactoyl-glutathione to form glutathione and D-lactic acid. This is Hydroxyacylglutathione hydrolase from Baumannia cicadellinicola subsp. Homalodisca coagulata.